Consider the following 209-residue polypeptide: 3-hexulose-6-phosphate synthase (209 aa).

It belongs to the HPS/KGPDC family. HPS subfamily. In terms of assembly, homodimer.

It catalyses the reaction D-ribulose 5-phosphate + formaldehyde = D-arabino-hex-3-ulose 6-phosphate. The protein operates within one-carbon metabolism; formaldehyde assimilation via RuMP pathway; D-fructose 6-phosphate from D-ribulose 5-phosphate and formaldehyde: step 1/2. In terms of biological role, catalyzes the condensation of ribulose 5-phosphate with formaldehyde to form 3-hexulose 6-phosphate. This chain is 3-hexulose-6-phosphate synthase (rmpA), found in Methylomonas aminofaciens.